Here is a 912-residue protein sequence, read N- to C-terminus: DNA ligase 4 (912 aa).

Residues E276, T277, K278, L279, R283, E336, K350, F372, E432, K437, K454, and K456 each contribute to the ATP site. K278 serves as the catalytic N6-AMP-lysine intermediate. E336 lines the Mg(2+) pocket. Mg(2+) is bound at residue E432. Residues 615–625 are required for catalytic activity; the sequence is LASKHLYIDEY. BRCT domains follow at residues 659-748 and 809-912; these read KVSS…PAFM and CKLC…QFLI.

The protein belongs to the ATP-dependent DNA ligase family. In terms of assembly, interacts with XRCC4; the LIG4-XRCC4 subcomplex has a 1:2 stoichiometry. Component of the core long-range non-homologous end joining (NHEJ) complex (also named DNA-PK complex) composed of PRKDC, LIG4, XRCC4, XRCC6/Ku70, XRCC5/Ku86 and NHEJ1/XLF. Additional component of the NHEJ complex includes PAXX. Following autophosphorylation, PRKDC dissociates from DNA, leading to formation of the short-range NHEJ complex, composed of LIG4, XRCC4, XRCC6/Ku70, XRCC5/Ku86 and NHEJ1/XLF. It depends on Mg(2+) as a cofactor.

It localises to the nucleus. It carries out the reaction ATP + (deoxyribonucleotide)n-3'-hydroxyl + 5'-phospho-(deoxyribonucleotide)m = (deoxyribonucleotide)n+m + AMP + diphosphate.. In terms of biological role, DNA ligase involved in DNA non-homologous end joining (NHEJ); required for double-strand break (DSB) repair and V(D)J recombination. Catalyzes the NHEJ ligation step of the broken DNA during DSB repair by resealing the DNA breaks after the gap filling is completed. Joins single-strand breaks in a double-stranded polydeoxynucleotide in an ATP-dependent reaction. LIG4 is mechanistically flexible: it can ligate nicks as well as compatible DNA overhangs alone, while in the presence of XRCC4, it can ligate ends with 2-nucleotides (nt) microhomology and 1-nt gaps. Forms a subcomplex with XRCC4; the LIG4-XRCC4 subcomplex is responsible for the NHEJ ligation step and XRCC4 enhances the joining activity of LIG4. This is DNA ligase 4 from Gallus gallus (Chicken).